The sequence spans 208 residues: MTEGVGLKGRQVVVATGNAGKVREIEQALAGLDWRLTGLGSVTLPEETGATYEENAALKACAAAVACGLPALADDSGLEVEALDGQPGVYSARFGNRPNDRERNLYLLEKLRGETNRRAKFVSVVILAYPDGHLETYRGEMTGQLLEGPRGENGFGYDPLFVPDGETRSLAEMTVEEKRAISHRGRALAALQAAHKDGLPPRQVSVID.

16–21 (TGNAGK) serves as a coordination point for substrate. The Mg(2+) site is built by glutamate 46 and aspartate 75. Aspartate 75 serves as the catalytic Proton acceptor. Substrate contacts are provided by residues serine 76, 155 to 158 (FGYD), lysine 178, and 183 to 184 (HR).

The protein belongs to the HAM1 NTPase family. Homodimer. It depends on Mg(2+) as a cofactor.

The enzyme catalyses XTP + H2O = XMP + diphosphate + H(+). The catalysed reaction is dITP + H2O = dIMP + diphosphate + H(+). It catalyses the reaction ITP + H2O = IMP + diphosphate + H(+). In terms of biological role, pyrophosphatase that catalyzes the hydrolysis of nucleoside triphosphates to their monophosphate derivatives, with a high preference for the non-canonical purine nucleotides XTP (xanthosine triphosphate), dITP (deoxyinosine triphosphate) and ITP. Seems to function as a house-cleaning enzyme that removes non-canonical purine nucleotides from the nucleotide pool, thus preventing their incorporation into DNA/RNA and avoiding chromosomal lesions. This chain is dITP/XTP pyrophosphatase, found in Deinococcus deserti (strain DSM 17065 / CIP 109153 / LMG 22923 / VCD115).